Here is a 473-residue protein sequence, read N- to C-terminus: Glycine--tRNA ligase (473 aa).

2 residues coordinate substrate: arginine 101 and glutamate 172. ATP-binding positions include arginine 204–glutamate 206, phenylalanine 214–phenylalanine 219, glutamate 289–leucine 290, and glycine 333–arginine 336. Phenylalanine 219–glutamate 223 serves as a coordination point for substrate. Residue glutamate 329–glycine 333 coordinates substrate.

It belongs to the class-II aminoacyl-tRNA synthetase family. Homodimer.

The protein resides in the cytoplasm. The catalysed reaction is tRNA(Gly) + glycine + ATP = glycyl-tRNA(Gly) + AMP + diphosphate. In terms of biological role, catalyzes the attachment of glycine to tRNA(Gly). This is Glycine--tRNA ligase from Ureaplasma urealyticum serovar 10 (strain ATCC 33699 / Western).